We begin with the raw amino-acid sequence, 670 residues long: Glycine--tRNA ligase beta subunit (670 aa).

This sequence belongs to the class-II aminoacyl-tRNA synthetase family. Tetramer of two alpha and two beta subunits.

It is found in the cytoplasm. It catalyses the reaction tRNA(Gly) + glycine + ATP = glycyl-tRNA(Gly) + AMP + diphosphate. The chain is Glycine--tRNA ligase beta subunit from Thermotoga neapolitana (strain ATCC 49049 / DSM 4359 / NBRC 107923 / NS-E).